A 286-amino-acid chain; its full sequence is Aquaporin NIP4-1 (286 aa).

A run of 2 helical transmembrane segments spans residues 59-79 (VMVE…AALM) and 86-106 (LTFP…LSWL). The NPA 1 motif lies at 112-114 (NPA). 3 helical membrane-spanning segments follow: residues 133-153 (LYVA…NAVM), 173-193 (LPFL…ATVA), and 201-221 (TVGG…IGPV). Residues 227-229 (NPA) carry the NPA 2 motif. The chain crosses the membrane as a helical span at residues 241–261 (YDGVWIYVVAPVAGMLVGALC).

This sequence belongs to the MIP/aquaporin (TC 1.A.8) family. NIP (TC 1.A.8.12) subfamily. Expressed in leaves and at lower levels in roots.

The protein resides in the membrane. Aquaporins facilitate the transport of water and small neutral solutes across cell membranes. This Oryza sativa subsp. japonica (Rice) protein is Aquaporin NIP4-1 (NIP4-1).